Reading from the N-terminus, the 265-residue chain is uncharacterized protein (265 aa).

Residues 233–265 (STACGSDQRPTRLPRASCSSRSISGSAARPWKR) form a disordered region. Residues 247-265 (RASCSSRSISGSAARPWKR) are compositionally biased toward low complexity.

This is an uncharacterized protein from Escherichia coli.